The primary structure comprises 1358 residues: Phosphoinositide 3-kinase regulatory subunit 4 (1358 aa).

Residue Gly-2 is the site of N-myristoyl glycine attachment. The region spanning Phe-26–Leu-324 is the Protein kinase domain. ATP contacts are provided by residues Leu-32–Val-40 and Lys-53. Asp-148 (proton acceptor) is an active-site residue. HEAT repeat units follow at residues Ile-413 to Glu-450, Ile-458 to Arg-495, and Lys-572 to Trp-610. Phosphoserine is present on residues Ser-808, Ser-813, Ser-853, and Ser-865. Residues Leu-875–Ile-898 are disordered. WD repeat units follow at residues Glu-991–Thr-1030, Arg-1040–Ser-1079, Lys-1093–Thr-1134, Leu-1139–Ser-1178, Pro-1182–Thr-1223, and Pro-1237–Val-1278. The interval Lys-1307–Val-1326 is disordered. A compositionally biased stretch (basic and acidic residues) spans Asp-1315–Val-1326. Thr-1316 bears the Phosphothreonine mark. A WD 7 repeat occupies Gly-1327–Lys-1358.

Belongs to the protein kinase superfamily. Ser/Thr protein kinase family. In terms of assembly, component of the PI3K (PI3KC3/PI3K-III/class III phosphatidylinositol 3-kinase) complex the core of which is composed of the catalytic subunit PIK3C3, the regulatory subunit PIK3R4 and BECN1 associating with additional regulatory/auxiliary subunits to form alternative complex forms. Alternative complex forms containing a fourth regulatory subunit in a mutually exclusive manner are PI3K complex I (PI3KC3-C1) containing ATG14, and PI3K complex II (PI3KC3-C2) containing UVRAG. PI3KC3-C1 displays a V-shaped architecture with PIK3R4 serving as a bridge between PIK3C3 and the ATG14:BECN1 subcomplex. Both, PI3KC3-C1 and PI3KC3-C2, can associate with further regulatory subunits, such as RUBCN, SH3GLB1/Bif-1, AMBRA1 and NRBF2. PI3KC3-C1 probably associates with PIK3CB. Interacts with RAB7A in the presence of PIK3C3/VPS34. Interacts with NRBF2. Interacts with ARMC3. Mn(2+) is required as a cofactor. Post-translationally, myristoylated. Probably autophosphorylated. As to expression, ubiquitously expressed.

It localises to the late endosome. It is found in the cytoplasmic vesicle. The protein resides in the autophagosome. Its subcellular location is the membrane. The enzyme catalyses L-seryl-[protein] + ATP = O-phospho-L-seryl-[protein] + ADP + H(+). It carries out the reaction L-threonyl-[protein] + ATP = O-phospho-L-threonyl-[protein] + ADP + H(+). Functionally, regulatory subunit of the PI3K complex that mediates formation of phosphatidylinositol 3-phosphate; different complex forms are believed to play a role in multiple membrane trafficking pathways: PI3KC3-C1 is involved in initiation of autophagosomes and PI3KC3-C2 in maturation of autophagosomes and endocytosis. Involved in regulation of degradative endocytic trafficking and cytokinesis, probably in the context of PI3KC3-C2. The polypeptide is Phosphoinositide 3-kinase regulatory subunit 4 (PIK3R4) (Homo sapiens (Human)).